The sequence spans 128 residues: Sulfurtransferase TusD (128 aa).

Cysteine 78 serves as the catalytic Cysteine persulfide intermediate.

The protein belongs to the DsrE/TusD family. As to quaternary structure, heterohexamer, formed by a dimer of trimers. The hexameric TusBCD complex contains 2 copies each of TusB, TusC and TusD. The TusBCD complex interacts with TusE.

Its subcellular location is the cytoplasm. Part of a sulfur-relay system required for 2-thiolation of 5-methylaminomethyl-2-thiouridine (mnm(5)s(2)U) at tRNA wobble positions. Accepts sulfur from TusA and transfers it in turn to TusE. The chain is Sulfurtransferase TusD from Escherichia coli O139:H28 (strain E24377A / ETEC).